The following is a 98-amino-acid chain: NADH-ubiquinone oxidoreductase chain 4L (98 aa).

3 consecutive transmembrane segments (helical) span residues 1–21 (MPLI…GMLI), 29–49 (SLLC…LMAL), and 61–81 (VVLL…LVSI).

It belongs to the complex I subunit 4L family. Core subunit of respiratory chain NADH dehydrogenase (Complex I) which is composed of 45 different subunits.

It is found in the mitochondrion inner membrane. The catalysed reaction is a ubiquinone + NADH + 5 H(+)(in) = a ubiquinol + NAD(+) + 4 H(+)(out). Functionally, core subunit of the mitochondrial membrane respiratory chain NADH dehydrogenase (Complex I) which catalyzes electron transfer from NADH through the respiratory chain, using ubiquinone as an electron acceptor. Part of the enzyme membrane arm which is embedded in the lipid bilayer and involved in proton translocation. This Hylobates lar (Lar gibbon) protein is NADH-ubiquinone oxidoreductase chain 4L (MT-ND4L).